Consider the following 452-residue polypeptide: GATA-binding factor 2 (452 aa).

The tract at residues 130-182 (GGSLYPGTGSSACPSSSHSSPHLFGFPPTPPKDVSPDPGPASPPSSSRLEDKD) is disordered. A compositionally biased stretch (low complexity) spans 139-151 (SSACPSSSHSSPH). Pro residues predominate over residues 156–172 (PPTPPKDVSPDPGPASP). 2 GATA-type zinc fingers span residues 267 to 291 (CVNC…CNAC) and 321 to 345 (CANC…CNAC). The segment covering 426–438 (QTPTPIHPSSSLS) has biased composition (polar residues). The interval 426-452 (QTPTPIHPSSSLSFGHPHHSSMVTAMG) is disordered.

As to expression, expressed in the developing ventral blood island, and in the embryonic nervous system.

Its subcellular location is the nucleus. This Xenopus laevis (African clawed frog) protein is GATA-binding factor 2 (gata2).